A 407-amino-acid polypeptide reads, in one-letter code: 45 kDa calcium-binding protein (407 aa).

A signal peptide spans 1–35; it reads MVWSWVAMASRWGPLVGLAPRCLWLLGAVLLMDAS. N40 carries N-linked (GlcNAc...) asparagine glycosylation. EF-hand domains are found at residues 98–133 and 137–172; these read RSRR…KTAE and EAME…SKGH. Residue S99 is modified to Phosphoserine. Residues D111, N113, D115, K117, E122, D150, D152, D154, H156, and E161 each coordinate Ca(2+). Phosphothreonine is present on residues T193 and T217. Positions 249 to 259 are enriched in low complexity; sequence GSSLAGAPGPG. Residues 249–282 form a disordered region; sequence GSSLAGAPGPGDQRQGPGIAGKSGKVLREPQPGC. Ca(2+) contacts are provided by D291, D293, D295, Q297, and E302. 3 EF-hand domains span residues 291 to 313, 323 to 358, and 359 to 394; these read DQDG…TVEN, WVKD…MNEY, and NALN…FTGS. T310 bears the Phosphothreonine mark. D336, N338, and D340 together coordinate Ca(2+). Phosphothreonine is present on T344. Ca(2+) contacts are provided by E347, D372, N374, N376, H378, and E383. The necessary for intracellular retention in Golgi apparatus lumen stretch occupies residues 354–407; the sequence is PMNEYNALNEAKQMIAVADENQNHHLEPEEVLKYSEFFTGSKLVDYARSVHEEF.

Belongs to the CREC family.

Its subcellular location is the golgi apparatus lumen. In terms of biological role, may regulate calcium-dependent activities in the endoplasmic reticulum lumen or post-ER compartment. The protein is 45 kDa calcium-binding protein (SDF4) of Macaca fascicularis (Crab-eating macaque).